The chain runs to 458 residues: UDP-N-acetylglucosamine 1-carboxyvinyltransferase (458 aa).

Residue 22 to 23 participates in phosphoenolpyruvate binding; that stretch reads KN. Arg-94 provides a ligand contact to UDP-N-acetyl-alpha-D-glucosamine. Asp-119 serves as the catalytic Proton donor. UDP-N-acetyl-alpha-D-glucosamine-binding residues include Asp-309 and Val-331.

Belongs to the EPSP synthase family. MurA subfamily.

The protein resides in the cytoplasm. The catalysed reaction is phosphoenolpyruvate + UDP-N-acetyl-alpha-D-glucosamine = UDP-N-acetyl-3-O-(1-carboxyvinyl)-alpha-D-glucosamine + phosphate. The protein operates within cell wall biogenesis; peptidoglycan biosynthesis. Functionally, cell wall formation. Adds enolpyruvyl to UDP-N-acetylglucosamine. In Chlamydia pneumoniae (Chlamydophila pneumoniae), this protein is UDP-N-acetylglucosamine 1-carboxyvinyltransferase.